The primary structure comprises 140 residues: Large ribosomal subunit protein uL16c (140 aa).

It belongs to the universal ribosomal protein uL16 family. Part of the 50S ribosomal subunit.

Its subcellular location is the plastid. The protein resides in the chloroplast. This is Large ribosomal subunit protein uL16c from Psilotum nudum (Whisk fern).